A 151-amino-acid polypeptide reads, in one-letter code: Thymosin beta (151 aa).

Tandem repeats lie at residues 24–29, 62–67, 100–105, and 134–139. Residues 24 to 139 are 4 X 6 AA repeat of L-[KH]-[KSH]-[VT]-[EP]-[TV]; that stretch reads LKKVETTEKN…DKSALHHVET (116 aa).

The protein belongs to the thymosin beta family. In terms of assembly, interacts (via repeats 1, 2 and 4) with G-actin in a 1:3 ratio. Interacts (via repeats 2 and 3) with F-actin. At the comma stage, enriched in the developing nerve ring (at protein level). Ubiquitously expressed in larvae and adults with enrichment in the spermatheca, the intestinal tract and the posterior bulb of the pharynx (at protein level). Expressed in oocytes and in the gonad (at protein level).

The protein localises to the cytoplasm. The protein resides in the cell cortex. Its subcellular location is the cell junction. It is found in the cytoskeleton. Plays an important role in the organization of the cytoskeleton by regulating actin polymerization in two ways. Firstly, by binding to and sequestering actin monomers (G actin) inhibits actin polymerization. Secondly, by binding directly filamentous actin (F actin) promotes actin polymerization. Regulates the formation of cortical actin in oocytes conferring them enough rigidity to sustain the contractions during ovulation. The protein is Thymosin beta of Caenorhabditis elegans.